A 514-amino-acid chain; its full sequence is Protein phosphatase 1H (514 aa).

Ser-7 carries the phosphoserine modification. Residues 77–507 (ATGYAEVINA…DDISVYVIPL (431 aa)) enclose the PPM-type phosphatase domain. The disordered stretch occupies residues 109 to 135 (AVTSTPNRNSSKRRSSLPNGEGLQLKE). Thr-113 carries the phosphothreonine modification. Residues Ser-124 and Ser-211 each carry the phosphoserine modification. An Omega-N-methylarginine modification is found at Arg-213. Position 221 is a phosphoserine (Ser-221). Thr-224 bears the Phosphothreonine mark. Ser-422 bears the Phosphoserine mark.

It belongs to the PP2C family.

It is found in the nucleus. Its subcellular location is the cytoplasm. The enzyme catalyses O-phospho-L-seryl-[protein] + H2O = L-seryl-[protein] + phosphate. It catalyses the reaction O-phospho-L-threonyl-[protein] + H2O = L-threonyl-[protein] + phosphate. In terms of biological role, dephosphorylates CDKN1B at 'Thr-187', thus removing a signal for proteasomal degradation. This chain is Protein phosphatase 1H (PPM1H), found in Homo sapiens (Human).